The following is a 144-amino-acid chain: Large ribosomal subunit protein uL15 (144 aa).

The tract at residues 1 to 48 (MIKLESLQDPSPRKRRTKLLGRGPSSGHGKTSCRGHKGDGSRSGYKRR) is disordered.

The protein belongs to the universal ribosomal protein uL15 family. Part of the 50S ribosomal subunit.

In terms of biological role, binds to the 23S rRNA. This is Large ribosomal subunit protein uL15 from Chlamydia abortus (strain DSM 27085 / S26/3) (Chlamydophila abortus).